Reading from the N-terminus, the 334-residue chain is BTB and MATH domain-containing protein 39 (334 aa).

Residues 14–141 form the MATH domain; it reads IVTLVFNIYN…EGRFQIEFDL (128 aa). Positions 164 to 229 constitute a BTB domain; sequence ADGELITDGK…LQLDSFEVSV (66 aa).

This is BTB and MATH domain-containing protein 39 (bath-39) from Caenorhabditis elegans.